The chain runs to 412 residues: N-carbamoyl-L-amino-acid amidohydrolase (412 aa).

Positions 82, 93, 128, and 193 each coordinate a divalent metal cation. Glutamine 196, histidine 229, asparagine 278, arginine 291, and glycine 360 together coordinate an N-carbamoyl-L-alpha-amino acid. An involved in dimerization region spans residues 212–330; it reads SIVGVRALRV…DVDEFFNLSP (119 aa). Histidine 385 contributes to the a divalent metal cation binding site.

It belongs to the peptidase M20 family. As to quaternary structure, homodimer. Mn(2+) serves as cofactor. The cofactor is Ni(2+). Requires Co(2+) as cofactor. It depends on Fe(2+) as a cofactor.

It carries out the reaction an N-carbamoyl-L-alpha-amino acid + H2O + 2 H(+) = an L-alpha-amino acid + NH4(+) + CO2. The enzyme catalyses N-carbamoyl-L-tryptophan + H2O + 2 H(+) = L-tryptophan + NH4(+) + CO2. It catalyses the reaction N-carbamoyl-L-tyrosine + H2O + 2 H(+) = L-tyrosine + NH4(+) + CO2. The catalysed reaction is N-carbamoyl-L-phenylalanine + H2O + 2 H(+) = L-phenylalanine + NH4(+) + CO2. Its function is as follows. Catalyzes the hydrolysis of aliphatic N-carbamoyl-L-alpha-amino acids to free L-alpha-amino acids. Is strictly L-specific since it is inactive toward N-carbamoyl-D-alpha-amino acids. Shows a preference for aromatic N-carbamoyl-L-alpha-amino acids, such as N-carbamoyl-L-tryptophan and N-carbamoyl-L-tyrosine and, to a lesser extent, N-carbamoyl-L-phenylalanine and the non-natural amino acid N-carbamoyl-L-thienylalanine. Carbamoyl derivatives of beta-alanine and charged aliphatic amino acids are not accepted as substrates. This is N-carbamoyl-L-amino-acid amidohydrolase from Paenarthrobacter aurescens (Arthrobacter aurescens).